Here is a 208-residue protein sequence, read N- to C-terminus: Sodium/potassium-transporting ATPase subunit beta-1-interacting protein 4 (208 aa).

A run of 4 helical transmembrane segments spans residues 10–30 (LILLCTLQLVAALERQVFDFL), 35–55 (APILANFLHIVATILGLFGTL), 62–82 (VIAYALWAAVWVTWNVFLICF), and 151–171 (ALQILLALLGFVYACYVTSVF).

This sequence belongs to the NKAIN family. In terms of assembly, interacts with atp1b1 C-terminus.

The protein localises to the cell membrane. The protein is Sodium/potassium-transporting ATPase subunit beta-1-interacting protein 4 (nkain4) of Xenopus tropicalis (Western clawed frog).